Reading from the N-terminus, the 744-residue chain is Phosphoribosylformylglycinamidine synthase subunit PurL (744 aa).

H49 is a catalytic residue. Residues Y52 and K91 each coordinate ATP. Residue E93 coordinates Mg(2+). Substrate-binding positions include S94–H97 and R116. The Proton acceptor role is filled by H95. D117 contacts Mg(2+). Position 240 (Q240) interacts with substrate. D268 is a Mg(2+) binding site. E312–Q314 provides a ligand contact to substrate. D493 and G530 together coordinate ATP. A Mg(2+)-binding site is contributed by N531. S533 contributes to the substrate binding site.

Belongs to the FGAMS family. Monomer. Part of the FGAM synthase complex composed of 1 PurL, 1 PurQ and 2 PurS subunits.

The protein resides in the cytoplasm. The catalysed reaction is N(2)-formyl-N(1)-(5-phospho-beta-D-ribosyl)glycinamide + L-glutamine + ATP + H2O = 2-formamido-N(1)-(5-O-phospho-beta-D-ribosyl)acetamidine + L-glutamate + ADP + phosphate + H(+). It participates in purine metabolism; IMP biosynthesis via de novo pathway; 5-amino-1-(5-phospho-D-ribosyl)imidazole from N(2)-formyl-N(1)-(5-phospho-D-ribosyl)glycinamide: step 1/2. Functionally, part of the phosphoribosylformylglycinamidine synthase complex involved in the purines biosynthetic pathway. Catalyzes the ATP-dependent conversion of formylglycinamide ribonucleotide (FGAR) and glutamine to yield formylglycinamidine ribonucleotide (FGAM) and glutamate. The FGAM synthase complex is composed of three subunits. PurQ produces an ammonia molecule by converting glutamine to glutamate. PurL transfers the ammonia molecule to FGAR to form FGAM in an ATP-dependent manner. PurS interacts with PurQ and PurL and is thought to assist in the transfer of the ammonia molecule from PurQ to PurL. The sequence is that of Phosphoribosylformylglycinamidine synthase subunit PurL from Nitrobacter hamburgensis (strain DSM 10229 / NCIMB 13809 / X14).